The sequence spans 335 residues: Stearoyl-CoA desaturase 5 (335 aa).

At 1-54 the chain is on the cytoplasmic side; the sequence is MPGPAVDAEKVPFRSAKEEIRAGVGVEGSEGGGGGGGRERPGARGHRQDIVWRN. Residues 24–44 form a disordered region; the sequence is VGVEGSEGGGGGGGRERPGAR. A compositionally biased stretch (gly residues) spans 25–36; sequence GVEGSEGGGGGG. N54 contacts substrate. Residues 55 to 75 form a helical membrane-spanning segment; sequence VFLMSLLHLAAVYSLVLIPKA. Residues 76–77 lie on the Lumenal side of the membrane; sequence QP. Residues 78–98 traverse the membrane as a helical segment; that stretch reads LTLLWAYFCFLLTALGVTAGA. Positions 99 and 104 each coordinate Fe cation. A Histidine box-1 motif is present at residues 99–104; that stretch reads HRLWSH. Over 99-198 the chain is Cytoplasmic; the sequence is HRLWSHRSYK…VVRFQRKYYK (100 aa). Residues N127, R134, and D135 each coordinate substrate. Residues H136, H139, and H140 each contribute to the Fe cation site. The short motif at 136-140 is the Histidine box-2 element; sequence HRVHH. The substrate site is built by R167 and K168. A helical membrane pass occupies residues 199–219; the sequence is ITVVLMCFVVPTLVPWYIWGE. Residues 220–227 are Lumenal-facing; sequence SLWNSYFL. Residues 228-247 form a helical membrane-spanning segment; the sequence is ASILRYTISLNVTWLVNSVA. Residue W241 coordinates substrate. Fe cation contacts are provided by H248, H277, H280, and H281. Topologically, residues 248–335 are cytoplasmic; that stretch reads HMYGNRPYDK…RKARTGDGSA (88 aa). The Histidine box-3 signature appears at 277 to 281; sequence HNYHH.

Belongs to the fatty acid desaturase type 1 family. As to quaternary structure, may self-associate and form homodimers. It depends on Fe(2+) as a cofactor. Detected in brain.

It is found in the endoplasmic reticulum membrane. The enzyme catalyses octadecanoyl-CoA + 2 Fe(II)-[cytochrome b5] + O2 + 2 H(+) = (9Z)-octadecenoyl-CoA + 2 Fe(III)-[cytochrome b5] + 2 H2O. It carries out the reaction hexadecanoyl-CoA + 2 Fe(II)-[cytochrome b5] + O2 + 2 H(+) = (9Z)-hexadecenoyl-CoA + 2 Fe(III)-[cytochrome b5] + 2 H2O. In terms of biological role, stearoyl-CoA desaturase that utilizes O(2) and electrons from reduced cytochrome b5 to introduce the first double bond into saturated fatty acyl-CoA substrates. Catalyzes the insertion of a cis double bond at the delta-9 position into fatty acyl-CoA substrates including palmitoyl-CoA and stearoyl-CoA. Gives rise to a mixture of 16:1 and 18:1 unsaturated fatty acids. Involved in neuronal cell proliferation and differentiation through down-regulation of EGFR/AKT/MAPK and Wnt signaling pathways. This Bos taurus (Bovine) protein is Stearoyl-CoA desaturase 5 (SCD5).